Reading from the N-terminus, the 404-residue chain is Serine/threonine-protein kinase UCN (404 aa).

Positions 22-340 (LKVLKLLGKG…AAEIKEHAFF (319 aa)) constitute a Protein kinase domain. ATP-binding positions include 28 to 36 (LGKGATGTV) and Lys55. Asp153 serves as the catalytic Proton acceptor. The tract at residues 185-207 (EFYHLSDPEPDPNPESNLSHNKK) is disordered. Positions 341–404 (KGVRWELLTE…CSENNPFVDF (64 aa)) constitute an AGC-kinase C-terminal domain.

Belongs to the protein kinase superfamily. AGC Ser/Thr protein kinase family. Expressed in the epidermis and cortex of the transition zone of the root apex and developing flowers. Expressed in rosette leaves, stems and siliques.

It localises to the cytoplasm. The protein resides in the nucleus. The catalysed reaction is L-seryl-[protein] + ATP = O-phospho-L-seryl-[protein] + ADP + H(+). The enzyme catalyses L-threonyl-[protein] + ATP = O-phospho-L-threonyl-[protein] + ADP + H(+). Its function is as follows. Regulates planar ovule integument development by suppressing aberrantly oriented growth. Maintains planar growth of integuments by repressing the developmental regulator and transcription factor KAN4 which is involved in the control of early integument growth and polarity. Restricts growth in stamen filaments, petals, and cotyledons. This chain is Serine/threonine-protein kinase UCN, found in Arabidopsis thaliana (Mouse-ear cress).